We begin with the raw amino-acid sequence, 113 residues long: Ribonuclease P protein component (113 aa).

Belongs to the RnpA family. In terms of assembly, consists of a catalytic RNA component (M1 or rnpB) and a protein subunit.

It carries out the reaction Endonucleolytic cleavage of RNA, removing 5'-extranucleotides from tRNA precursor.. Functionally, RNaseP catalyzes the removal of the 5'-leader sequence from pre-tRNA to produce the mature 5'-terminus. It can also cleave other RNA substrates such as 4.5S RNA. The protein component plays an auxiliary but essential role in vivo by binding to the 5'-leader sequence and broadening the substrate specificity of the ribozyme. The sequence is that of Ribonuclease P protein component from Clostridium novyi (strain NT).